The sequence spans 344 residues: MLTLGLESSCDETACALVDADAQIVANVVSSQQYHASYGGVVPELASRAHLQMLPSVVNSALEKSGVSLDDIDLIAVTHTPGLIGSLAVGVNFAKGLAIGSQKPMIGVNHVEAHLYAAYMEAKNVEFPALGLVMSGAHTSMFLMEDPLSYKLIGNTRDDAIGETFDKVGRFLGLPYPGGALIEMMASQGCEESYPFSAAKVPGYDLSFSGLKTAVLYAIKGNNSNSRSPLPDLSQKEKNNIAASFQKAAFMTIAQKLPKIIKNFSCRSILVGGGVANNKYFQTLLQNTLNLPLYFPSSKLCTDNAAMIAGLGRELFLSRKTTQGITPCARYRWESVADSLSPHP.

Positions 110 and 114 each coordinate Fe cation. Substrate contacts are provided by residues Val-133–Ala-137, Asp-166, Gly-179, and Asn-278. Fe cation is bound at residue Asp-303.

It belongs to the KAE1 / TsaD family. Requires Fe(2+) as cofactor.

Its subcellular location is the cytoplasm. It carries out the reaction L-threonylcarbamoyladenylate + adenosine(37) in tRNA = N(6)-L-threonylcarbamoyladenosine(37) in tRNA + AMP + H(+). Functionally, required for the formation of a threonylcarbamoyl group on adenosine at position 37 (t(6)A37) in tRNAs that read codons beginning with adenine. Is involved in the transfer of the threonylcarbamoyl moiety of threonylcarbamoyl-AMP (TC-AMP) to the N6 group of A37, together with TsaE and TsaB. TsaD likely plays a direct catalytic role in this reaction. The protein is tRNA N6-adenosine threonylcarbamoyltransferase of Chlamydia felis (strain Fe/C-56) (Chlamydophila felis).